Reading from the N-terminus, the 703-residue chain is Zinc finger protein 750 (703 aa).

The segment at 25 to 51 adopts a CCHC-type zinc-finger fold; it reads YKCFQCPFTCNEKSHLFNHMKYGLCKN. Positions 27, 30, 43, and 49 each coordinate Zn(2+). Disordered regions lie at residues 64-113, 350-527, 553-614, and 630-703; these read KCPK…DAKE, PASS…YGPM, WAPR…KQTA, and RVAD…TRVS. Positions 67–106 are enriched in polar residues; it reads KSSSLDPKQTHQPEPTSKPATSKSLLNGLSSFDPKSQQGS. The segment covering 352–361 has biased composition (low complexity); that stretch reads SSPSELNLSS. Residues 367 to 394 show a composition bias toward basic and acidic residues; it reads TECEKGSPVPEAKDPSKDGQRDAEEAKM. Composition is skewed to polar residues over residues 410-421 and 456-477; these read SPTNFTQTSQTF and GSES…SLQA. A compositionally biased stretch (basic and acidic residues) spans 574–611; the sequence is TETKGSEDRTSRVETPQDKAHSRTTPDVHTEDSSDEQK. Polar residues predominate over residues 639–655; sequence QEPTRQDVPTLSATENL.

Its subcellular location is the nucleus. In terms of biological role, transcription factor involved in epidermis differentiation. Required for terminal epidermal differentiation: acts downstream of p63/TP63 and activates expression of late epidermal differentiation genes. Specifically binds to the promoter of KLF4 and promotes its expression. This is Zinc finger protein 750 (Znf750) from Mus musculus (Mouse).